Reading from the N-terminus, the 298-residue chain is U1 small nuclear ribonucleoprotein A (298 aa).

RRM domains follow at residues 2–113 and 227–298; these read SALY…KART and KVLL…GFAK.

Belongs to the RRM U1 A/B'' family. As to quaternary structure, component of the spliceosome where it is associated with snRNP U1.

The protein localises to the nucleus. Its function is as follows. Involved in nuclear mRNA splicing. The principal role of the U1A is to help fold or maintain U1 RNA in an active configuration. It is the first snRNP to interact with pre-mRNA. This interaction is required for the subsequent binding of U2 snRNP and the U4/U6/U5 tri-snRNP. The protein is U1 small nuclear ribonucleoprotein A (MUD1) of Saccharomyces cerevisiae (strain ATCC 204508 / S288c) (Baker's yeast).